The following is a 474-amino-acid chain: Vacuolar basic amino acid transporter 2 (474 aa).

At Met-1–Asn-33 the chain is on the cytoplasmic side. The chain crosses the membrane as a helical span at residues Cys-34 to Asn-54. The Vacuolar segment spans residues Ile-55–Arg-62. Residues Ala-63 to Pro-85 form a helical membrane-spanning segment. At Ser-86–Asn-97 the chain is on the cytoplasmic side. A helical transmembrane segment spans residues Leu-98–Ile-118. At Gly-119–Arg-121 the chain is on the vacuolar side. The helical transmembrane segment at Trp-122–Val-142 threads the bilayer. Residues Pro-143–Asp-167 lie on the Cytoplasmic side of the membrane. Residues Val-168–Gly-188 traverse the membrane as a helical segment. Topologically, residues Cys-189–Trp-196 are vacuolar. A helical membrane pass occupies residues Thr-197–Leu-217. Topologically, residues His-218–Ser-238 are cytoplasmic. A helical membrane pass occupies residues Val-239–Leu-259. The Vacuolar segment spans residues Pro-260–Lys-273. Residues Ala-274–Phe-294 form a helical membrane-spanning segment. Residues Ser-295 to Arg-303 are Cytoplasmic-facing. The helical transmembrane segment at Leu-304 to Glu-324 threads the bilayer. Topologically, residues Lys-325–Leu-331 are vacuolar. Residues Ile-332–Phe-352 traverse the membrane as a helical segment. At Thr-353 to Ser-375 the chain is on the cytoplasmic side. Residues Ile-376–Leu-396 traverse the membrane as a helical segment. Residues Leu-397–His-447 are Vacuolar-facing. Asn-420 carries an N-linked (GlcNAc...) asparagine glycan. Residues Leu-448–Ala-468 traverse the membrane as a helical segment. Over Lys-469–Arg-474 the chain is Cytoplasmic.

The protein belongs to the major facilitator superfamily.

The protein resides in the vacuole membrane. Its function is as follows. Transporter required for vacuolar uptake of histidine, arginine and lysine and to a lesser extent tyrosine. In Saccharomyces cerevisiae (strain ATCC 204508 / S288c) (Baker's yeast), this protein is Vacuolar basic amino acid transporter 2 (VBA2).